Here is a 257-residue protein sequence, read N- to C-terminus: Anamorsin homolog (257 aa).

The segment at 1–134 (MSDRKNVLFV…KVGSSDKVTL (134 aa)) is N-terminal SAM-like domain. The interval 135–168 (NPEMKENVVSAWKLDDNNSETISEDDLLEADDLI) is linker. [2Fe-2S] cluster contacts are provided by cysteine 178, cysteine 187, cysteine 190, and cysteine 192. A fe-S binding site A region spans residues 178–192 (CATTKKAKACKDCSC). Cysteine 218, cysteine 221, cysteine 229, and cysteine 232 together coordinate [4Fe-4S] cluster. 2 consecutive short sequence motifs (cx2C motif) follow at residues 218–221 (CGSC) and 229–232 (CASC). Positions 218–232 (CGSCYLGDAFRCASC) are fe-S binding site B.

It belongs to the anamorsin family. Monomer. Requires [2Fe-2S] cluster as cofactor. [4Fe-4S] cluster serves as cofactor.

It localises to the cytoplasm. Its subcellular location is the mitochondrion intermembrane space. In terms of biological role, component of the cytosolic iron-sulfur (Fe-S) protein assembly (CIA) machinery. Required for the maturation of extramitochondrial Fe-S proteins. Part of an electron transfer chain functioning in an early step of cytosolic Fe-S biogenesis, facilitating the de novo assembly of a [4Fe-4S] cluster on the cytosolic Fe-S scaffold complex. Electrons are transferred from NADPH via a FAD- and FMN-containing diflavin oxidoreductase. Together with the diflavin oxidoreductase, also required for the assembly of the diferric tyrosyl radical cofactor of ribonucleotide reductase (RNR), probably by providing electrons for reduction during radical cofactor maturation in the catalytic small subunit. This Acyrthosiphon pisum (Pea aphid) protein is Anamorsin homolog.